Here is a 68-residue protein sequence, read N- to C-terminus: uncharacterized protein (68 aa).

This is an uncharacterized protein from Saccharomyces cerevisiae (strain ATCC 204508 / S288c) (Baker's yeast).